Here is a 147-residue protein sequence, read N- to C-terminus: UPF0735 ACT domain-containing protein BH1214 (147 aa).

The ACT domain maps to 70-145 (TLSINLEDRS…AVEKVELVGS (76 aa)).

The protein belongs to the UPF0735 family.

The protein is UPF0735 ACT domain-containing protein BH1214 of Halalkalibacterium halodurans (strain ATCC BAA-125 / DSM 18197 / FERM 7344 / JCM 9153 / C-125) (Bacillus halodurans).